The following is a 277-amino-acid chain: Indole-3-glycerol phosphate synthase (277 aa).

It belongs to the TrpC family.

It carries out the reaction 1-(2-carboxyphenylamino)-1-deoxy-D-ribulose 5-phosphate + H(+) = (1S,2R)-1-C-(indol-3-yl)glycerol 3-phosphate + CO2 + H2O. The protein operates within amino-acid biosynthesis; L-tryptophan biosynthesis; L-tryptophan from chorismate: step 4/5. The sequence is that of Indole-3-glycerol phosphate synthase from Pseudomonas putida (strain ATCC 47054 / DSM 6125 / CFBP 8728 / NCIMB 11950 / KT2440).